Here is a 148-residue protein sequence, read N- to C-terminus: UPF0260 protein YE2365 (148 aa).

The protein belongs to the UPF0260 family.

The chain is UPF0260 protein YE2365 from Yersinia enterocolitica serotype O:8 / biotype 1B (strain NCTC 13174 / 8081).